Reading from the N-terminus, the 187-residue chain is Photosystem I assembly protein Ycf4 (187 aa).

The next 2 helical transmembrane spans lie at 25-45 (YLWAIIVTMGGIGFLLSGISS) and 69-89 (MSFYGLLGTIYGIFLWLTVIW).

It belongs to the Ycf4 family.

Its subcellular location is the cellular thylakoid membrane. In terms of biological role, seems to be required for the assembly of the photosystem I complex. In Trichodesmium erythraeum (strain IMS101), this protein is Photosystem I assembly protein Ycf4.